Consider the following 145-residue polypeptide: uncharacterized protein (145 aa).

A helical transmembrane segment spans residues 46–66 (FFFLFFLFFFFFFTFQFLVAF).

The protein localises to the membrane. This is an uncharacterized protein from Saccharomyces cerevisiae (strain ATCC 204508 / S288c) (Baker's yeast).